The following is a 329-amino-acid chain: Cathepsin K (329 aa).

The N-terminal stretch at methionine 1 to alanine 15 is a signal peptide. Residues leucine 16–arginine 114 constitute a propeptide, activation peptide. A glycan (N-linked (GlcNAc...) asparagine) is linked at asparagine 103. Cystine bridges form between cysteine 136–cysteine 177 and cysteine 170–cysteine 210. Cysteine 139 is a catalytic residue. A glycan (N-linked (GlcNAc...) asparagine) is linked at asparagine 213. Cysteine 269 and cysteine 318 are oxidised to a cystine. Residues histidine 276 and asparagine 296 contribute to the active site.

It belongs to the peptidase C1 family.

The protein localises to the lysosome. It is found in the secreted. It localises to the apical cell membrane. It catalyses the reaction Broad proteolytic activity. With small-molecule substrates and inhibitors, the major determinant of specificity is P2, which is preferably Leu, Met &gt; Phe, and not Arg.. Thiol protease involved in osteoclastic bone resorption and may participate partially in the disorder of bone remodeling. Displays potent endoprotease activity against fibrinogen at acid pH. May play an important role in extracellular matrix degradation. Involved in the release of thyroid hormone thyroxine (T4) by limited proteolysis of TG/thyroglobulin in the thyroid follicle lumen. This chain is Cathepsin K (Ctsk), found in Rattus norvegicus (Rat).